Reading from the N-terminus, the 553-residue chain is Zinc finger protein Elbow (553 aa).

Disordered stretches follow at residues 59 to 243 and 388 to 407; these read STKQ…MHSP and GGGG…SGGS. Low complexity-rich tracts occupy residues 96-110 and 121-134; these read SPVS…TGSV and SSSS…TFKP. Polar residues-rich tracts occupy residues 137–146, 153–173, and 224–236; these read PNNNISNITT, TNLS…KSMT, and TAST…NSKE. Residues 287–480 are self-association; it reads SASAAAAAAS…PDAVLSAAAA (194 aa). The segment at 287-553 is interaction with noc; it reads SASAAAAAAS…YGPRMGSSHP (267 aa). Over residues 388–406 the composition is skewed to gly residues; that stretch reads GGGGGGSSKSSGSQGGSGG. The C2H2-type zinc finger occupies 437–466; sequence YVCSWIGSDAAYCGKRFGTSDDLFQHLRTH.

Belongs to the Elbow/Noc family. In terms of assembly, self-associates. Interacts with gro and noc.

In terms of biological role, may negatively regulate Notch-induced cell proliferation in the eye-head primordium. May act in leg and wing primordia to negatively regulate body-wall specifying genes and thereby promote appendage formation. Required for tracheal development. The chain is Zinc finger protein Elbow (elB) from Drosophila melanogaster (Fruit fly).